A 423-amino-acid polypeptide reads, in one-letter code: Protein CLP1 homolog (423 aa).

ATP-binding positions include Glu-19, Lys-60, and 122–127 (DVGKTT).

It belongs to the Clp1 family. Clp1 subfamily.

Its subcellular location is the nucleus. Required for endonucleolytic cleavage during polyadenylation-dependent pre-mRNA 3'-end formation. This Culex quinquefasciatus (Southern house mosquito) protein is Protein CLP1 homolog (cbc).